The chain runs to 373 residues: RNA cytidine acetyltransferase (373 aa).

Position 53 (R53) interacts with ATP. Residues I216–T218 and T223–S229 each bind acetyl-CoA. Residues G246–E271 form a disordered region. R313 serves as a coordination point for acetyl-CoA.

It belongs to the RNA cytidine acetyltransferase family. NAT10 subfamily.

Its subcellular location is the nucleus. The protein resides in the nucleolus. The enzyme catalyses a cytidine in 18S rRNA + acetyl-CoA + ATP + H2O = an N(4)-acetylcytidine in 18S rRNA + ADP + phosphate + CoA + H(+). It catalyses the reaction a cytidine in tRNA + acetyl-CoA + ATP + H2O = an N(4)-acetylcytidine in tRNA + ADP + phosphate + CoA + H(+). In terms of biological role, RNA cytidine acetyltransferase with specificity toward both 18S rRNA and tRNAs. Catalyzes the formation of N(4)-acetylcytidine (ac4C) in 18S rRNA. Required for early nucleolar cleavages of precursor rRNA at sites A0, A1 and A2 during 18S rRNA synthesis. Catalyzes the formation of ac4C in serine and leucine tRNAs. Requires a tRNA-binding adapter protein for full tRNA acetyltransferase activity but not for 18S rRNA acetylation. This is RNA cytidine acetyltransferase from Achlya ambisexualis (Water mold).